A 281-amino-acid polypeptide reads, in one-letter code: Phosphoglycerate mutase-like protein AT74H (281 aa).

The Tele-phosphohistidine intermediate role is filled by His-17. The Proton donor/acceptor role is filled by Glu-109.

This sequence belongs to the phosphoglycerate mutase family.

In terms of biological role, may play a role in carbohydrates metabolism. In Arabidopsis thaliana (Mouse-ear cress), this protein is Phosphoglycerate mutase-like protein AT74H.